The chain runs to 305 residues: Sulfate adenylyltransferase subunit 2 1 (305 aa).

Residues 283-305 (RSGRAIDHDQAGSMERKKREGYF) are disordered.

This sequence belongs to the PAPS reductase family. CysD subfamily. In terms of assembly, heterodimer composed of CysD, the smaller subunit, and CysN.

The catalysed reaction is sulfate + ATP + H(+) = adenosine 5'-phosphosulfate + diphosphate. It participates in sulfur metabolism; hydrogen sulfide biosynthesis; sulfite from sulfate: step 1/3. Its function is as follows. With CysN forms the ATP sulfurylase (ATPS) that catalyzes the adenylation of sulfate producing adenosine 5'-phosphosulfate (APS) and diphosphate, the first enzymatic step in sulfur assimilation pathway. APS synthesis involves the formation of a high-energy phosphoric-sulfuric acid anhydride bond driven by GTP hydrolysis by CysN coupled to ATP hydrolysis by CysD. This chain is Sulfate adenylyltransferase subunit 2 1, found in Chromohalobacter salexigens (strain ATCC BAA-138 / DSM 3043 / CIP 106854 / NCIMB 13768 / 1H11).